Consider the following 162-residue polypeptide: Large ribosomal subunit protein bL9 (162 aa).

The protein belongs to the bacterial ribosomal protein bL9 family.

Functionally, binds to the 23S rRNA. The sequence is that of Large ribosomal subunit protein bL9 from Chlorobaculum parvum (strain DSM 263 / NCIMB 8327) (Chlorobium vibrioforme subsp. thiosulfatophilum).